The sequence spans 83 residues: Apolipoprotein C-I (83 aa).

The first 26 residues, 1–26 (MRLILSLPVLAVVLAMVLEGPAPAQA), serve as a signal peptide directing secretion.

This sequence belongs to the apolipoprotein C1 family.

It is found in the secreted. Inhibitor of lipoprotein binding to the low density lipoprotein (LDL) receptor, LDL receptor-related protein, and very low density lipoprotein (VLDL) receptor. Associates with high density lipoproteins (HDL) and the triacylglycerol-rich lipoproteins in the plasma and makes up about 10% of the protein of the VLDL and 2% of that of HDL. Appears to interfere directly with fatty acid uptake and is also the major plasma inhibitor of cholesteryl ester transfer protein (CETP). Binds free fatty acids and reduces their intracellular esterification. Modulates the interaction of APOE with beta-migrating VLDL and inhibits binding of beta-VLDL to the LDL receptor-related protein. The chain is Apolipoprotein C-I (APOC1) from Rousettus aegyptiacus (Egyptian fruit bat).